The sequence spans 233 residues: Flagellar calcium-binding protein TB-17 (233 aa).

Polar residues predominate over residues Met1–Asn11. The disordered stretch occupies residues Met1–Asp29. The span at Gly20–Asp29 shows a compositional bias: basic and acidic residues. EF-hand domains follow at residues Glu48–Leu83, Tyr130–Trp165, and Val167–Gln202. Ca(2+)-binding residues include Asp61, Asn63, Thr65, Lys67, Glu72, Asp143, Asp145, Ser147, Glu154, Asp180, Asn182, Ser184, and Glu191. The disordered stretch occupies residues Val203–Ala233. Over residues Ala214–Gly225 the composition is skewed to low complexity.

It belongs to the calflagin family.

The protein resides in the cell projection. Its subcellular location is the cilium. It is found in the flagellum. May contribute to the rapid motility of the trypanosomes, playing a role either in flagellar structure or in calcium metabolism. Could alternate between a GDP-bound inactive form to a calcium/GTP-bound active form. This chain is Flagellar calcium-binding protein TB-17 (FCABP), found in Trypanosoma brucei brucei.